The primary structure comprises 233 residues: Large ribosomal subunit protein uL1 (233 aa).

Belongs to the universal ribosomal protein uL1 family. As to quaternary structure, part of the 50S ribosomal subunit.

Functionally, binds directly to 23S rRNA. The L1 stalk is quite mobile in the ribosome, and is involved in E site tRNA release. In terms of biological role, protein L1 is also a translational repressor protein, it controls the translation of the L11 operon by binding to its mRNA. This is Large ribosomal subunit protein uL1 from Brucella suis (strain ATCC 23445 / NCTC 10510).